We begin with the raw amino-acid sequence, 274 residues long: MTLQEEIIRQLGVKASIAPQEEIRKTVDFLKAYLRKHSFLKTYVLGISGGQDSTLAGKLAQMAIAELREETSDQAYQFIAVRLPYGVQTDEADAQKALAFIMPDQTLTINIKAAVDGQVEALQAAGVEISDFNKGNIKARQRMISQYAIAGQMAGAVIGTDHAAENITGFFTKFGDGGADILPLFRLNKRQGKALLKVLGADAALYEKVPTADLEDQKPGLADEVALGVTYQDIDDYLEGKLISKVAQATIEKWWHKGQHKRHLPITIFDDFWK.

An ATP-binding site is contributed by 46-53; that stretch reads GISGGQDS. Asp-52 provides a ligand contact to Mg(2+). Deamido-NAD(+) is bound at residue Arg-140. Residue Thr-160 participates in ATP binding. A Mg(2+)-binding site is contributed by Glu-165. Deamido-NAD(+) contacts are provided by Lys-173 and Asp-180. Residues Lys-189 and Thr-211 each contribute to the ATP site. Deamido-NAD(+) is bound at residue 260-261; sequence HK.

It belongs to the NAD synthetase family. As to quaternary structure, homodimer.

It catalyses the reaction deamido-NAD(+) + NH4(+) + ATP = AMP + diphosphate + NAD(+) + H(+). It functions in the pathway cofactor biosynthesis; NAD(+) biosynthesis; NAD(+) from deamido-NAD(+) (ammonia route): step 1/1. Functionally, catalyzes the ATP-dependent amidation of deamido-NAD to form NAD. Uses ammonia as a nitrogen source. This is NH(3)-dependent NAD(+) synthetase from Streptococcus pyogenes serotype M3 (strain ATCC BAA-595 / MGAS315).